We begin with the raw amino-acid sequence, 240 residues long: Phosphoribosylaminoimidazole-succinocarboxamide synthase (240 aa).

It belongs to the SAICAR synthetase family.

The enzyme catalyses 5-amino-1-(5-phospho-D-ribosyl)imidazole-4-carboxylate + L-aspartate + ATP = (2S)-2-[5-amino-1-(5-phospho-beta-D-ribosyl)imidazole-4-carboxamido]succinate + ADP + phosphate + 2 H(+). The protein operates within purine metabolism; IMP biosynthesis via de novo pathway; 5-amino-1-(5-phospho-D-ribosyl)imidazole-4-carboxamide from 5-amino-1-(5-phospho-D-ribosyl)imidazole-4-carboxylate: step 1/2. The sequence is that of Phosphoribosylaminoimidazole-succinocarboxamide synthase from Coxiella burnetii (strain RSA 493 / Nine Mile phase I).